A 176-amino-acid polypeptide reads, in one-letter code: Large ribosomal subunit protein uL16 (176 aa).

It belongs to the universal ribosomal protein uL16 family.

The sequence is that of Large ribosomal subunit protein uL16 from Thermoplasma acidophilum (strain ATCC 25905 / DSM 1728 / JCM 9062 / NBRC 15155 / AMRC-C165).